A 149-amino-acid polypeptide reads, in one-letter code: MSKVSQQNSTPGVNGISVIHTQAHASGLQQVPQLVPAGPGGGGKAVPPSKQSKKSSPMDRNSDEYRQRRERNNMAVKKSRLKSKQKAQDTLQRVNQLKEENERLEAKIKLLTKELSVLKDLFLEHAHNLADNVQPSSTENTTNPDKAGQ.

Residues 1 to 12 (MSKVSQQNSTPG) are compositionally biased toward polar residues. Residues 1 to 92 (MSKVSQQNST…SKQKAQDTLQ (92 aa)) are disordered. A Glycyl lysine isopeptide (Lys-Gly) (interchain with G-Cter in SUMO2) cross-link involves residue Lys3. A compositionally biased stretch (low complexity) spans 28–37 (LQQVPQLVPA). Positions 56–72 (SPMDRNSDEYRQRRERN) are enriched in basic and acidic residues. Residues 62 to 125 (SDEYRQRRER…SVLKDLFLEH (64 aa)) enclose the bZIP domain. Positions 66 to 93 (RQRRERNNMAVKKSRLKSKQKAQDTLQR) are basic motif. Residues 97 to 118 (LKEENERLEAKIKLLTKELSVL) form a leucine-zipper region. The interval 128–149 (NLADNVQPSSTENTTNPDKAGQ) is disordered. A compositionally biased stretch (polar residues) spans 131-149 (DNVQPSSTENTTNPDKAGQ).

This sequence belongs to the bZIP family. C/EBP subfamily. Binds DNA as a dimer and can form stable heterodimers with CEBPA and CEBPB. Interacts with ZNF638; this interaction increases transcriptional activation.

Its subcellular location is the nucleus. In terms of biological role, transcription factor that binds to the promoter and the enhancer regions of target genes. Binds to the enhancer element PRE-I (positive regulatory element-I) of the IL-4 gene. Binds to the promoter and the enhancer of the immunoglobulin heavy chain. Binds to GPE1, a cis-acting element in the G-CSF gene promoter. In Bos taurus (Bovine), this protein is CCAAT/enhancer-binding protein gamma (CEBPG).